Consider the following 147-residue polypeptide: MDHSKYLLTIFLENDDSFFKYLSEQDDETAMSDIETIVTYLNFLLSLLIRSKDKLESIGYYYEPLSEECKTLVDFSNMKNFRILFNKIPINILNKQITVNKGYLSDFVTTLMRLKKELFLESPEPITYIDPRKDPTFLNILSILHEK.

This sequence belongs to the chordopoxvirinae J1 family. Homodimer. Part of a complex composed of A30, G7, F10 kinase, A15, D2, D3, and J1. Interacts with A45.

The protein resides in the virion. It is found in the host cytoplasm. In terms of biological role, late protein which is a part of a large complex required for early virion morphogenesis. This complex participates in the formation of virosomes and the incorporation of virosomal contents into nascent immature virions. J1 protein is required for DNA packaging during immature virions (IV) formation. This Sheeppox virus (strain KS-1) (SPPV) protein is Protein J1 homolog.